We begin with the raw amino-acid sequence, 98 residues long: NADH-ubiquinone oxidoreductase chain 4L (98 aa).

The next 3 helical transmembrane spans lie at 1 to 21 (MIPT…GMLT), 27 to 47 (VASL…TTLI), and 61 to 81 (IILL…LISI).

It belongs to the complex I subunit 4L family. As to quaternary structure, core subunit of respiratory chain NADH dehydrogenase (Complex I) which is composed of 45 different subunits.

The protein localises to the mitochondrion inner membrane. It carries out the reaction a ubiquinone + NADH + 5 H(+)(in) = a ubiquinol + NAD(+) + 4 H(+)(out). In terms of biological role, core subunit of the mitochondrial membrane respiratory chain NADH dehydrogenase (Complex I) which catalyzes electron transfer from NADH through the respiratory chain, using ubiquinone as an electron acceptor. Part of the enzyme membrane arm which is embedded in the lipid bilayer and involved in proton translocation. In Macaca nigra (Celebes black macaque), this protein is NADH-ubiquinone oxidoreductase chain 4L (MT-ND4L).